Consider the following 126-residue polypeptide: uncharacterized protein (126 aa).

A disordered region spans residues 83 to 126 (VPPPLDRSHESPEEFFPPQNRNRGGGPKAQIQRHPPEALEKTTH). The segment covering 116–126 (HPPEALEKTTH) has biased composition (basic and acidic residues).

This is an uncharacterized protein from Galliformes (FAdV-1).